A 372-amino-acid chain; its full sequence is Glutamate 5-kinase (372 aa).

Position 14 (Lys14) interacts with ATP. Positions 54, 141, and 153 each coordinate substrate. Residue 173–174 (TD) coordinates ATP. The PUA domain occupies 280-358 (RGRVIIDAGA…SEIESVLGHL (79 aa)).

It belongs to the glutamate 5-kinase family.

The protein resides in the cytoplasm. The catalysed reaction is L-glutamate + ATP = L-glutamyl 5-phosphate + ADP. It functions in the pathway amino-acid biosynthesis; L-proline biosynthesis; L-glutamate 5-semialdehyde from L-glutamate: step 1/2. Functionally, catalyzes the transfer of a phosphate group to glutamate to form L-glutamate 5-phosphate. The polypeptide is Glutamate 5-kinase (Cupriavidus metallidurans (strain ATCC 43123 / DSM 2839 / NBRC 102507 / CH34) (Ralstonia metallidurans)).